We begin with the raw amino-acid sequence, 127 residues long: MTKKAIIPAGTSKPIAPFVPGSMADGVLYVSGTLPFDKDNNVVHVGDATAQTRHVLEAIKSVVETAGGTLDDVTFNMIMIRDWADYAKVNEVYAEYFAGEKPARYCIQCGLVKPEALIEIASIAHIG.

The protein belongs to the RutC family.

The catalysed reaction is (Z)-3-aminoacrylate + H2O + H(+) = 3-oxopropanoate + NH4(+). Functionally, involved in pyrimidine catabolism. Catalyzes the deamination of 3-aminoacrylate to malonic semialdehyde, a reaction that can also occur spontaneously. RutC may facilitate the reaction and modulate the metabolic fitness, rather than catalyzing essential functions. This is 3-aminoacrylate deaminase RutC from Pseudomonas syringae pv. syringae (strain B728a).